A 297-amino-acid polypeptide reads, in one-letter code: Urease accessory protein UreD (297 aa).

The span at 1-18 (MNSSAASPPAVSPHAAPS) shows a compositional bias: low complexity. 2 disordered regions span residues 1-20 (MNSS…PSRT) and 178-201 (VDQA…PRRR).

Belongs to the UreD family. As to quaternary structure, ureD, UreF and UreG form a complex that acts as a GTP-hydrolysis-dependent molecular chaperone, activating the urease apoprotein by helping to assemble the nickel containing metallocenter of UreC. The UreE protein probably delivers the nickel.

It localises to the cytoplasm. Functionally, required for maturation of urease via the functional incorporation of the urease nickel metallocenter. The sequence is that of Urease accessory protein UreD from Parafrankia sp. (strain EAN1pec).